An 828-amino-acid polypeptide reads, in one-letter code: Kinesin-associated protein 3 (828 aa).

3 ARM repeats span residues 332–372, 373–411, and 577–611; these read YVEN…NLSF, DTDL…HVSQ, and DDSC…CQIV.

In terms of assembly, heterotrimer of a 115 kDa subunit (KAP115) and two kinesin-like subunits of 95 kDa (KRP95) and 85 kDa (KRP85).

In terms of biological role, binds to the tail domain of the KRP85/KRP95 heterodimer to form a heterotrimeric kinesin-II complex and may regulate the spindle vesicle targeting of this complex. This Strongylocentrotus purpuratus (Purple sea urchin) protein is Kinesin-associated protein 3 (KAP115).